A 723-amino-acid polypeptide reads, in one-letter code: Malate synthase G (723 aa).

Residues V118, 125–126 (RY), S274, and R311 contribute to the acetyl-CoA site. Residue R338 is the Proton acceptor of the active site. Glyoxylate contacts are provided by residues R338, E427, and 452–455 (GFLD). E427 and D455 together coordinate Mg(2+). P536 contacts acetyl-CoA. C617 is subject to Cysteine sulfenic acid (-SOH). D631 functions as the Proton donor in the catalytic mechanism. C688 carries the cysteine sulfenic acid (-SOH) modification.

This sequence belongs to the malate synthase family. GlcB subfamily. As to quaternary structure, monomer. Requires Mg(2+) as cofactor.

The protein localises to the cytoplasm. The enzyme catalyses glyoxylate + acetyl-CoA + H2O = (S)-malate + CoA + H(+). The protein operates within carbohydrate metabolism; glyoxylate cycle; (S)-malate from isocitrate: step 2/2. Functionally, involved in the glycolate utilization. Catalyzes the condensation and subsequent hydrolysis of acetyl-coenzyme A (acetyl-CoA) and glyoxylate to form malate and CoA. The polypeptide is Malate synthase G (Escherichia coli O6:H1 (strain CFT073 / ATCC 700928 / UPEC)).